The chain runs to 381 residues: tRNA-specific 2-thiouridylase MnmA (381 aa).

Residues 9–16 and methionine 35 each bind ATP; that span reads GMSGGVDS. The interval 95–97 is interaction with target base in tRNA; that stretch reads NPD. Cysteine 100 (nucleophile) is an active-site residue. Cysteine 100 and cysteine 196 are joined by a disulfide. Position 124 (glycine 124) interacts with ATP. The interval 146–148 is interaction with tRNA; the sequence is KDQ. Cysteine 196 serves as the catalytic Cysteine persulfide intermediate. Positions 308–309 are interaction with tRNA; it reads RY.

It belongs to the MnmA/TRMU family.

It is found in the cytoplasm. The enzyme catalyses S-sulfanyl-L-cysteinyl-[protein] + uridine(34) in tRNA + AH2 + ATP = 2-thiouridine(34) in tRNA + L-cysteinyl-[protein] + A + AMP + diphosphate + H(+). In terms of biological role, catalyzes the 2-thiolation of uridine at the wobble position (U34) of tRNA, leading to the formation of s(2)U34. The polypeptide is tRNA-specific 2-thiouridylase MnmA (Paraburkholderia xenovorans (strain LB400)).